Consider the following 728-residue polypeptide: Phosphoribosylformylglycinamidine synthase subunit PurL (728 aa).

H54 is an active-site residue. ATP-binding residues include Y57 and K96. E98 contributes to the Mg(2+) binding site. Substrate-binding positions include 99–102 and R121; that span reads SHNH. The Proton acceptor role is filled by H100. Mg(2+) is bound at residue D122. Q245 lines the substrate pocket. D273 serves as a coordination point for Mg(2+). 317 to 319 is a binding site for substrate; that stretch reads ETQ. 2 residues coordinate ATP: D495 and G532. N533 lines the Mg(2+) pocket. Substrate is bound at residue S535.

The protein belongs to the FGAMS family. As to quaternary structure, monomer. Part of the FGAM synthase complex composed of 1 PurL, 1 PurQ and 2 PurS subunits.

Its subcellular location is the cytoplasm. It catalyses the reaction N(2)-formyl-N(1)-(5-phospho-beta-D-ribosyl)glycinamide + L-glutamine + ATP + H2O = 2-formamido-N(1)-(5-O-phospho-beta-D-ribosyl)acetamidine + L-glutamate + ADP + phosphate + H(+). The protein operates within purine metabolism; IMP biosynthesis via de novo pathway; 5-amino-1-(5-phospho-D-ribosyl)imidazole from N(2)-formyl-N(1)-(5-phospho-D-ribosyl)glycinamide: step 1/2. Functionally, part of the phosphoribosylformylglycinamidine synthase complex involved in the purines biosynthetic pathway. Catalyzes the ATP-dependent conversion of formylglycinamide ribonucleotide (FGAR) and glutamine to yield formylglycinamidine ribonucleotide (FGAM) and glutamate. The FGAM synthase complex is composed of three subunits. PurQ produces an ammonia molecule by converting glutamine to glutamate. PurL transfers the ammonia molecule to FGAR to form FGAM in an ATP-dependent manner. PurS interacts with PurQ and PurL and is thought to assist in the transfer of the ammonia molecule from PurQ to PurL. The sequence is that of Phosphoribosylformylglycinamidine synthase subunit PurL from Macrococcus caseolyticus (strain JCSC5402) (Macrococcoides caseolyticum).